The primary structure comprises 407 residues: Tyrosine--tRNA ligase (407 aa).

Tyr-35 is a binding site for L-tyrosine. The 'HIGH' region signature appears at 40 to 49 (PTADSLHVGH). Residues Tyr-168 and Gln-172 each coordinate L-tyrosine. A 'KMSKS' region motif is present at residues 228–232 (KMGKT). Lys-231 provides a ligand contact to ATP. One can recognise an S4 RNA-binding domain in the interval 341 to 405 (NLLVDLLVKC…RGKKNFNRIV (65 aa)).

Belongs to the class-I aminoacyl-tRNA synthetase family. TyrS type 1 subfamily. Homodimer.

It is found in the cytoplasm. The catalysed reaction is tRNA(Tyr) + L-tyrosine + ATP = L-tyrosyl-tRNA(Tyr) + AMP + diphosphate + H(+). In terms of biological role, catalyzes the attachment of tyrosine to tRNA(Tyr) in a two-step reaction: tyrosine is first activated by ATP to form Tyr-AMP and then transferred to the acceptor end of tRNA(Tyr). The chain is Tyrosine--tRNA ligase from Clostridium botulinum (strain ATCC 19397 / Type A).